The following is a 209-amino-acid chain: Small ribosomal subunit protein uS5 (209 aa).

Residues 48–111 (LEDEVLDINM…DAAKLNITYI (64 aa)) enclose the S5 DRBM domain.

The protein belongs to the universal ribosomal protein uS5 family. Part of the 30S ribosomal subunit. Contacts protein S4.

With S4 and S12 plays an important role in translational accuracy. The polypeptide is Small ribosomal subunit protein uS5 (Methanosarcina acetivorans (strain ATCC 35395 / DSM 2834 / JCM 12185 / C2A)).